Consider the following 339-residue polypeptide: MVLQKNWQSLIKPEKLEVEPGGEPLRTATVVAEPLERGFGMTLGNAIRRVLLSSLQGAAVTAIQIDGVLHEFSSVAGVREDVTDIVLNVKQLALRMHGEGPKRMVLTATGPGEVRAGQIQTGHDIEVMNPDLVICTLDEGVKFGMEFTVNLGKGYVPAAANRPEDAPIGLIPVDAIYSPVRRVSYKVEPTRVGQVTDYDRLLLTVETNGAVTPEDAVALAARILQDQLQLFINFDEPRPVRTEEPQDDLPFNRNLLRKVDELELSVRSANCLKNDNIVYIGDLVQKTEQEMLRTPNFGRKSLNEIKEVLTSMGLSLGMNVPAWPPENIEDLAKRLDEPF.

The interval methionine 1–aspartate 235 is alpha N-terminal domain (alpha-NTD). The segment at phenylalanine 251–phenylalanine 339 is alpha C-terminal domain (alpha-CTD).

This sequence belongs to the RNA polymerase alpha chain family. As to quaternary structure, homodimer. The RNAP catalytic core consists of 2 alpha, 1 beta, 1 beta' and 1 omega subunit. When a sigma factor is associated with the core the holoenzyme is formed, which can initiate transcription.

The catalysed reaction is RNA(n) + a ribonucleoside 5'-triphosphate = RNA(n+1) + diphosphate. Its function is as follows. DNA-dependent RNA polymerase catalyzes the transcription of DNA into RNA using the four ribonucleoside triphosphates as substrates. The chain is DNA-directed RNA polymerase subunit alpha from Gluconacetobacter diazotrophicus (strain ATCC 49037 / DSM 5601 / CCUG 37298 / CIP 103539 / LMG 7603 / PAl5).